The following is a 66-amino-acid chain: 14-3-3-like protein 2 (66 aa).

The protein belongs to the 14-3-3 family.

The chain is 14-3-3-like protein 2 from Pseudotsuga menziesii (Douglas-fir).